The sequence spans 608 residues: Cilia- and flagella-associated protein 100 (608 aa).

Positions 1–17 (MSETLSNIVSKNMTNDK) are enriched in polar residues. The segment at 1–57 (MSETLSNIVSKNMTNDKNSLESMNISSSSSAEENPKKQAKKXKERGPDPSANPFHLS) is disordered. Residues 20–32 (LESMNISSSSSAE) are compositionally biased toward low complexity. Coiled-coil stretches lie at residues 164–196 (TLDCKRREIQRLETLATKEEARLQQAEKSLAKD) and 230–257 (LEIRDLTTQIVNIKSEISRFEDTLQHYK). 2 disordered regions span residues 291–320 (ASKDGSVNSTPGDKGPGIKGKASSVWAKEG) and 339–377 (LSSPQQGSQPSESSGGNSRGSNSPIPLTQEDTDSDGEEP). Residues 339-361 (LSSPQQGSQPSESSGGNSRGSNS) are compositionally biased toward low complexity. Coiled coils occupy residues 385–435 (QQLL…QLKQ) and 500–575 (TVQM…RGRT).

It belongs to the CFAP100 family.

Its subcellular location is the cytoplasm. The protein localises to the cytoskeleton. It is found in the cilium axoneme. In terms of biological role, may play a role in ciliary/flagellar motility by regulating the assembly and the activity of axonemal inner dynein arm. The protein is Cilia- and flagella-associated protein 100 of Macaca fascicularis (Crab-eating macaque).